Consider the following 111-residue polypeptide: Probable 4-amino-4-deoxy-L-arabinose-phosphoundecaprenol flippase subunit ArnE (111 aa).

The next 3 helical transmembrane spans lie at 39–59 (WLAI…WVLQ), 61–81 (VPVG…TLAA), and 89–109 (VSLR…CMGV). One can recognise an EamA domain in the interval 40–109 (LAISLLLLGG…IVAGVMCMGV (70 aa)).

This sequence belongs to the ArnE family. Heterodimer of ArnE and ArnF.

The protein localises to the cell inner membrane. Its pathway is bacterial outer membrane biogenesis; lipopolysaccharide biosynthesis. Its function is as follows. Translocates 4-amino-4-deoxy-L-arabinose-phosphoundecaprenol (alpha-L-Ara4N-phosphoundecaprenol) from the cytoplasmic to the periplasmic side of the inner membrane. In Sodalis glossinidius (strain morsitans), this protein is Probable 4-amino-4-deoxy-L-arabinose-phosphoundecaprenol flippase subunit ArnE.